Here is a 96-residue protein sequence, read N- to C-terminus: Large ribosomal subunit protein bL28 (96 aa).

Belongs to the bacterial ribosomal protein bL28 family.

The sequence is that of Large ribosomal subunit protein bL28 from Methylocella silvestris (strain DSM 15510 / CIP 108128 / LMG 27833 / NCIMB 13906 / BL2).